The sequence spans 431 residues: Adenylosuccinate synthetase (431 aa).

GTP is bound by residues 13–19 (GDEGKGK) and 41–43 (GHT). Asp-14 (proton acceptor) is an active-site residue. Mg(2+)-binding residues include Asp-14 and Gly-41. IMP-binding positions include 14–17 (DEGK), 39–42 (NAGH), Thr-130, Arg-144, Gln-225, Thr-240, and Arg-304. His-42 serves as the catalytic Proton donor. A substrate-binding site is contributed by 300-306 (TTTGRSR). GTP contacts are provided by residues Arg-306, 332 to 334 (KLD), and 414 to 416 (STG).

The protein belongs to the adenylosuccinate synthetase family. In terms of assembly, homodimer. It depends on Mg(2+) as a cofactor.

The protein localises to the cytoplasm. It catalyses the reaction IMP + L-aspartate + GTP = N(6)-(1,2-dicarboxyethyl)-AMP + GDP + phosphate + 2 H(+). Its pathway is purine metabolism; AMP biosynthesis via de novo pathway; AMP from IMP: step 1/2. Its function is as follows. Plays an important role in the de novo pathway of purine nucleotide biosynthesis. Catalyzes the first committed step in the biosynthesis of AMP from IMP. The chain is Adenylosuccinate synthetase from Marinobacter nauticus (strain ATCC 700491 / DSM 11845 / VT8) (Marinobacter aquaeolei).